The chain runs to 167 residues: Translationally-controlled tumor protein homolog (167 aa).

The region spanning 1–167 (MLVYQDLLTG…FAYALKEIKC (167 aa)) is the TCTP domain.

Belongs to the TCTP family.

It is found in the cytoplasm. Its function is as follows. Involved in calcium binding and microtubule stabilization. This is Translationally-controlled tumor protein homolog (TCTP) from Medicago sativa (Alfalfa).